The sequence spans 1273 residues: MQKGIRLNDGHVASLGLLARKDGTRKGYLSKRSSDNTKWQTKWFALLQNLLFYFESDSSSRPSGLYLLEGCVCDRAPSPKPALSAKEPLEKQHYFTVNFSHENQKALELRTEDAKDCDEWVAAIAHASYRTLATEHEALMQKYLHLLQIVETEKTVAKQLRQQIEDGEIEIERLKAEITSLLKDNERIQSTQTVAPNDEDSDIKKIKKVQSFLRGWLCRRKWKTIIQDYIRSPHADSMRKRNQVVFSMLEAEAEYVQQLHILVNNFLRPLRMAASSKKPPITHDDVSSIFLNSETIMFLHQIFYQGLKARISSWPTLVLADLFDILLPMLNIYQEFVRNHQYSLQILAHCKQNRDFDKLLKHYEAKPDCEERTLETFLTYPMFQIPRYILTLHELLAHTPHEHVERNSLDYAKSKLEELSRIMHDEVSETENIRKNLAIERMIIEGCEILLDTSQTFVRQGSLIQVPMSEKGKITRGRLGSLSLKKEGERQCFLFSKHLIICTRGSGGKLHLTKNGVISLIDCTLLEEPESTEEEAKGSGQDIDHLDFKIGVEPKDSPPFTVILVASSRQEKAAWTSDISQCVDNIRCNGLMMNAFEENSKVTVPQMIKRTREGTREAEMSRSDASLYCDDVDIRFSKTMNSCKVLQIRYASVERLLERLTDLRFLSIDFLNTFLHSYRVFTTAIVVLDKLITIYKKPISAIPARWLRSLELLFASGQNNKLLYGEPPKSPRATRKFSSPPPLSITKTSSPSRRRKLSLNIPIITGGKALDLAALSCNSNGYTSMYSAMSPFSKATLDTSKLYVSSSFTNKIPDEGDTTPEKPEDPSALSKQSSEVSMREESDIDQNQSDDGDTETSPTKSPTTPKSVKNKNSSEFPLFSYNNGVVMTSCRELDNNRSALSAASAFAIATAGANEGTPNKEKYRRMSLASAGFPPDQRNGDKEFVIRRAATNRVLNVLRHWVSKHSQDFETNDELKCKVIGFLEEVMHDPELLTQERKAAANIIRTLTQEDPGDNQITLEEITQMAEGVKAEPFENHSALEIAEQLTLLDHLVFKKIPYEEFFGQGWMKLEKNERTPYIMKTTKHFNDISNLIASEIIRNEDINARVSAIEKWVAVADICRCLHNYNAVLEITSSMNRSAIFRLKKTWLKVSKQTKALIDKLQKLVSSEGRFKNLREALKNCDPPCVPYLGMYLTDLAFIEEGTPNYTEDGLVNFSKMRMISHIIREIRQFQQTAYKIEHQAKVTQYLLDQSFVMDEESLYESSLRIEPKLPT.

A PH 1 domain is found at 22 to 129 (DGTRKGYLSK…WVAAIAHASY (108 aa)). Residues 204 to 229 (KKIKKVQSFLRGWLCRRKWKTIIQDY) enclose the IQ domain. The region spanning 240–426 (KRNQVVFSML…EELSRIMHDE (187 aa)) is the DH domain. Residues 467-584 (PMSEKGKITR…WTSDISQCVD (118 aa)) form the PH 2 domain. Residues Ser-577 and Ser-626 each carry the phosphoserine; by PLK2 modification. In terms of domain architecture, N-terminal Ras-GEF spans 644–761 (KVLQIRYASV…SRRRKLSLNI (118 aa)). The disordered stretch occupies residues 724–754 (YGEPPKSPRATRKFSSPPPLSITKTSSPSRR). Position 758 is a phosphoserine (Ser-758). 2 positions are modified to phosphoserine; by PLK2: Ser-779 and Ser-800. A disordered region spans residues 809–874 (TNKIPDEGDT…PKSVKNKNSS (66 aa)). The span at 842–854 (SDIDQNQSDDGDT) shows a compositional bias: acidic residues. Residues 855 to 867 (ETSPTKSPTTPKS) show a composition bias toward low complexity. Positions 1038 to 1270 (SALEIAEQLT…YESSLRIEPK (233 aa)) constitute a Ras-GEF domain.

In terms of assembly, homooligomer and heterooligomer with RASGRF2. Interacts with USP8, thereby regulating its stability. Post-translationally, phosphorylated by PLK2, leading to ubiquitination and degradation by the proteasome. Ubiquitinated and degraded following phosphorylation by PLK2. In terms of processing, phosphorylated by SRC and LCK. Phosphorylation by LCK increases its capacity to stimulate the GDP/GTP exchange on Ras, whereas its phosphorylation by SRC seems not to have an effect on stimulation activity.

Its function is as follows. Promotes the exchange of Ras-bound GDP by GTP. The protein is Ras-specific guanine nucleotide-releasing factor 1 (RASGRF1) of Homo sapiens (Human).